A 215-amino-acid chain; its full sequence is uncharacterized protein (215 aa).

Positions 120–147 (HRAPQGTSSYQEGRRAHEATSAESDDDN) are disordered.

This is an uncharacterized protein from Homo sapiens (Human).